A 303-amino-acid chain; its full sequence is Glycine--tRNA ligase alpha subunit (303 aa).

It belongs to the class-II aminoacyl-tRNA synthetase family. In terms of assembly, tetramer of two alpha and two beta subunits.

The protein resides in the cytoplasm. The enzyme catalyses tRNA(Gly) + glycine + ATP = glycyl-tRNA(Gly) + AMP + diphosphate. The polypeptide is Glycine--tRNA ligase alpha subunit (Bordetella pertussis (strain Tohama I / ATCC BAA-589 / NCTC 13251)).